Here is a 315-residue protein sequence, read N- to C-terminus: Protein FRA10AC1 homolog (315 aa).

Position 1 is an N-acetylmethionine (Met-1). Residues 1 to 28 are disordered; sequence MHGHGGYDSDFSDDEQGGGSSKKRKKTV. Phosphoserine is present on residues Ser-9 and Ser-12. Position 36 is an N6-acetyllysine (Lys-36). A compositionally biased stretch (basic residues) spans 225–235; sequence KEIKSTKKKSK. A disordered region spans residues 225-308; sequence KEIKSTKKKS…EKSQEEEFDD (84 aa). Basic and acidic residues-rich tracts occupy residues 236–245 and 255–278; these read TTPECDESPR and EASKGKDEGHSSSKKSEDSRNRNA. 2 positions are modified to phosphoserine: Ser-283 and Ser-285.

In terms of assembly, interacts with ESS2.

The protein resides in the nucleus. Functionally, may be involved in pre-mRNA splicing. The chain is Protein FRA10AC1 homolog (Fra10ac1) from Mus musculus (Mouse).